A 274-amino-acid polypeptide reads, in one-letter code: 2,3,4,5-tetrahydropyridine-2,6-dicarboxylate N-succinyltransferase (274 aa).

This sequence belongs to the transferase hexapeptide repeat family.

It localises to the cytoplasm. The enzyme catalyses (S)-2,3,4,5-tetrahydrodipicolinate + succinyl-CoA + H2O = (S)-2-succinylamino-6-oxoheptanedioate + CoA. Its pathway is amino-acid biosynthesis; L-lysine biosynthesis via DAP pathway; LL-2,6-diaminopimelate from (S)-tetrahydrodipicolinate (succinylase route): step 1/3. The chain is 2,3,4,5-tetrahydropyridine-2,6-dicarboxylate N-succinyltransferase from Proteus mirabilis (strain HI4320).